The chain runs to 123 residues: MAGVAAGGALGAWARHGLGSWLTALLPSTFPLPTLMINVLGALLLGFVAGYGIERGRLPEAWRLPVTVGFIGSFTTFSTWSVDTVLLLDAGRWPLALANVGISLAVGLAAVWVGRRLAFRWRV.

A run of 3 helical transmembrane segments spans residues 30–50 (FPLP…FVAG), 68–88 (VGFI…VLLL), and 93–113 (WPLA…AVWV). Gly-72 and Thr-75 together coordinate Na(+).

This sequence belongs to the fluoride channel Fluc/FEX (TC 1.A.43) family.

It is found in the cell membrane. The catalysed reaction is fluoride(in) = fluoride(out). With respect to regulation, na(+) is not transported, but it plays an essential structural role and its presence is essential for fluoride channel function. In terms of biological role, fluoride-specific ion channel. Important for reducing fluoride concentration in the cell, thus reducing its toxicity. This Symbiobacterium thermophilum (strain DSM 24528 / JCM 14929 / IAM 14863 / T) protein is Fluoride-specific ion channel FluC 2.